Here is a 282-residue protein sequence, read N- to C-terminus: MTAAPAMSWWQVIVLAAAQGLTEFLPVSSSGHLAIVSRIFFSGDAGASFTAVSQLGTEAAVVIYFARDIVRILSAWLHGLVVKAHRNTDYRLGWYVIIGTIPICILGLFFKDDIRSGVRNLWVVVTALVVFSGVIALAEYVGRQSRHIERLTWRDAVVVGIAQTLALVPGVSRSGSTISAGLFLGLDRELAARFGFLLAIPAVFASGLFSLPDAFHPVTEGMSATGPQLLVATLIAFVLGLTAVAWLLRFLVRHNMYWFVGYRVLVGTGMLVLLATGTVAAT.

5 helical membrane passes run 90–110 (YRLG…GLFF), 121–141 (LWVV…AEYV), 194–214 (FGFL…LPDA), 228–248 (QLLV…AWLL), and 256–276 (MYWF…LLAT).

This sequence belongs to the UppP family.

The protein resides in the cell membrane. The enzyme catalyses di-trans,octa-cis-undecaprenyl diphosphate + H2O = di-trans,octa-cis-undecaprenyl phosphate + phosphate + H(+). Functionally, catalyzes the dephosphorylation of undecaprenyl diphosphate (UPP). Confers resistance to bacitracin. In Mycobacterium tuberculosis (strain ATCC 25618 / H37Rv), this protein is Undecaprenyl-diphosphatase.